The primary structure comprises 169 residues: MICLVLTIFANLFPAACTGAHERTFLAVKPDGVQRRLVGEIVRRFERKGFKLVALKLVQASEELLREHYAELRERPFYGRLVKYMASGPVVAMVWQGLDVVRTSRALIGATNPADAPPGTIRGDFCIEVGKNLIHGSDSVESARREIALWFRADELLCWEDSAGHWLYE.

ADP is bound by residues K29, R105, T111, R122, V129, and N132. The active-site Pros-phosphohistidine intermediate is the H135.

This sequence belongs to the NDK family. As to quaternary structure, homohexamer. Interacts (via its N-terminal region) with KAT5; this interaction enables recruitment of NME3 at DNA damage sites where it plays a role in the repair of DNA. Found in association with several ciliary nephronophthisis proteins, including NEK8, CEP164, ANKS6. Mg(2+) serves as cofactor.

It is found in the mitochondrion outer membrane. It localises to the cytoplasm. Its subcellular location is the cytoskeleton. The protein localises to the cilium basal body. It carries out the reaction a 2'-deoxyribonucleoside 5'-diphosphate + ATP = a 2'-deoxyribonucleoside 5'-triphosphate + ADP. The enzyme catalyses a ribonucleoside 5'-diphosphate + ATP = a ribonucleoside 5'-triphosphate + ADP. Functionally, catalyzes the phosphorylation of ribonucleosides and deoxyribonucleoside diphosphates, other than ATP, into the corresponding triphosphates with ATP as the major phosphate donor. The ATP gamma phosphate is transferred to the nucleoside diphosphate beta phosphate via a ping-pong mechanism, using a phosphorylated active-site intermediate. Through the catalyzed exchange of gamma-phosphate between di- and triphosphonucleosides participates in regulation of intracellular nucleotide homeostasis. Inhibits granulocyte differentiation. May be required for ciliary function during renal development. In terms of biological role, independently of its kinase activity, facilitates mitochondrial tethering prior to membrane fusion through its direct membrane-binding and hexamerization. Implicated in repair of both single- and double-stranded breaks in DNA through its association with the ribonucleotide reductase complex (RNR complex) via its interaction with the histone acetyltransferase KAT5, this interaction enables recruitment of NME3 at DNA damage sites where it plays a role in the repair of DNA, independently of its kinase activity. This Homo sapiens (Human) protein is Nucleoside diphosphate kinase 3.